A 112-amino-acid polypeptide reads, in one-letter code: MESRATAKFMRVSPRKTRLVARNIDGLPVEDAMNLLRFTPNKPAGVLYDVLRSALANAQQMPGVDVDAMVVKQVVVNEGPSWKRFLPRAQGRATRIKKRTSHITVILAEGQE.

The protein belongs to the universal ribosomal protein uL22 family. Part of the 50S ribosomal subunit.

Functionally, this protein binds specifically to 23S rRNA; its binding is stimulated by other ribosomal proteins, e.g. L4, L17, and L20. It is important during the early stages of 50S assembly. It makes multiple contacts with different domains of the 23S rRNA in the assembled 50S subunit and ribosome. Its function is as follows. The globular domain of the protein is located near the polypeptide exit tunnel on the outside of the subunit, while an extended beta-hairpin is found that lines the wall of the exit tunnel in the center of the 70S ribosome. The protein is Large ribosomal subunit protein uL22 of Nitratidesulfovibrio vulgaris (strain ATCC 29579 / DSM 644 / CCUG 34227 / NCIMB 8303 / VKM B-1760 / Hildenborough) (Desulfovibrio vulgaris).